A 227-amino-acid polypeptide reads, in one-letter code: Small ribosomal subunit protein uS5 (227 aa).

A disordered region spans residues 1-22 (MSKRSNRSNNKNNTNKFNIENW). The span at 7–18 (RSNNKNNTNKFN) shows a compositional bias: low complexity. The S5 DRBM domain occupies 63-126 (LEEEVMDVNL…DAAKYNLIKV (64 aa)).

This sequence belongs to the universal ribosomal protein uS5 family. Part of the 30S ribosomal subunit. Contacts protein S4.

Its function is as follows. With S4 and S12 plays an important role in translational accuracy. The sequence is that of Small ribosomal subunit protein uS5 from Methanosphaera stadtmanae (strain ATCC 43021 / DSM 3091 / JCM 11832 / MCB-3).